The primary structure comprises 101 residues: NADH-quinone oxidoreductase subunit K (101 aa).

A run of 3 helical transmembrane segments spans residues 4–24 (LADY…GIFI), 30–50 (LVLL…FIAF), and 61–81 (VFVF…LAIV).

Belongs to the complex I subunit 4L family. NDH-1 is composed of 14 different subunits. Subunits NuoA, H, J, K, L, M, N constitute the membrane sector of the complex.

It is found in the cell inner membrane. It carries out the reaction a quinone + NADH + 5 H(+)(in) = a quinol + NAD(+) + 4 H(+)(out). NDH-1 shuttles electrons from NADH, via FMN and iron-sulfur (Fe-S) centers, to quinones in the respiratory chain. The immediate electron acceptor for the enzyme in this species is believed to be ubiquinone. Couples the redox reaction to proton translocation (for every two electrons transferred, four hydrogen ions are translocated across the cytoplasmic membrane), and thus conserves the redox energy in a proton gradient. The polypeptide is NADH-quinone oxidoreductase subunit K (Alkalilimnicola ehrlichii (strain ATCC BAA-1101 / DSM 17681 / MLHE-1)).